A 79-amino-acid polypeptide reads, in one-letter code: Raniseptin-9 (79 aa).

The signal sequence occupies residues 1–22; the sequence is MAFLKKSLFLVLFLGIVSLSIC. Residues 23 to 49 constitute a propeptide that is removed on maturation; that stretch reads EEEKREGEEEEKQEEENEELSEEELRE. Positions 27–46 are disordered; that stretch reads REGEEEEKQEEENEELSEEE. Residues 30–44 are compositionally biased toward acidic residues; the sequence is EEEEKQEEENEELSE.

Belongs to the frog skin active peptide (FSAP) family. Dermaseptin subfamily. Expressed by the skin glands.

It localises to the secreted. Functionally, has antibacterial activity. The chain is Raniseptin-9 from Boana raniceps (Chaco tree frog).